The following is a 462-amino-acid chain: GTPase Der (462 aa).

EngA-type G domains are found at residues 3–166 (PVIA…ITEM) and 175–348 (IKIA…HSAI). GTP contacts are provided by residues 9–16 (GRPNVGKS), 56–60 (DTGGI), 118–121 (NKTD), 181–188 (GRPNVGKS), 228–232 (DTAGV), and 293–296 (NKWD). The KH-like domain occupies 349 to 433 (QSFSTPKLTR…PLKIEFKGGQ (85 aa)).

This sequence belongs to the TRAFAC class TrmE-Era-EngA-EngB-Septin-like GTPase superfamily. EngA (Der) GTPase family. As to quaternary structure, associates with the 50S ribosomal subunit.

GTPase that plays an essential role in the late steps of ribosome biogenesis. The sequence is that of GTPase Der from Legionella pneumophila (strain Lens).